The following is a 282-amino-acid chain: Undecaprenyl-diphosphatase (282 aa).

7 helical membrane passes run 40-60 (GAAFTAIVQIGTLIAVLIYFF), 85-105 (AKMGWMIAAGTIPIVVFGLLF), 117-137 (YWISAALITLAIILSLAEWLI), 158-178 (ALIIGLVQSIALIPGSSRSGV), 193-213 (AARFSFLLSLPAVFAAGIYQL), 231-251 (IVATLVAGIVGYASIAFLITF), and 258-278 (AVFIIYRIALGLTILALIATG).

It belongs to the UppP family.

Its subcellular location is the cell inner membrane. The enzyme catalyses di-trans,octa-cis-undecaprenyl diphosphate + H2O = di-trans,octa-cis-undecaprenyl phosphate + phosphate + H(+). Catalyzes the dephosphorylation of undecaprenyl diphosphate (UPP). Confers resistance to bacitracin. The protein is Undecaprenyl-diphosphatase of Prosthecochloris aestuarii (strain DSM 271 / SK 413).